A 271-amino-acid chain; its full sequence is Ribosomal RNA small subunit methyltransferase A (271 aa).

S-adenosyl-L-methionine contacts are provided by His-11, Leu-13, Gly-38, Glu-58, Asp-86, and Asn-101.

Belongs to the class I-like SAM-binding methyltransferase superfamily. rRNA adenine N(6)-methyltransferase family. RsmA subfamily.

It localises to the cytoplasm. It catalyses the reaction adenosine(1518)/adenosine(1519) in 16S rRNA + 4 S-adenosyl-L-methionine = N(6)-dimethyladenosine(1518)/N(6)-dimethyladenosine(1519) in 16S rRNA + 4 S-adenosyl-L-homocysteine + 4 H(+). Its function is as follows. Specifically dimethylates two adjacent adenosines (A1518 and A1519) in the loop of a conserved hairpin near the 3'-end of 16S rRNA in the 30S particle. May play a critical role in biogenesis of 30S subunits. In Helicobacter pylori (strain G27), this protein is Ribosomal RNA small subunit methyltransferase A.